Consider the following 704-residue polypeptide: Glycine--tRNA ligase beta subunit (704 aa).

Belongs to the class-II aminoacyl-tRNA synthetase family. As to quaternary structure, tetramer of two alpha and two beta subunits.

It is found in the cytoplasm. It carries out the reaction tRNA(Gly) + glycine + ATP = glycyl-tRNA(Gly) + AMP + diphosphate. The chain is Glycine--tRNA ligase beta subunit from Delftia acidovorans (strain DSM 14801 / SPH-1).